The primary structure comprises 902 residues: U3 small nucleolar RNA-associated protein 21 homolog (902 aa).

WD repeat units lie at residues 40–71 (DIEARGTHFLVTTSVGNTFQTYDCEKLNLLFV), 80–110 (TCLKSFKDFMLVAAGSKIFAYKRGKIIWDID), 119–154 (THLDAFGEWIIACTSSRHVYVWKHASKYSVPELHTT), 164–198 (TSLLHPSTYLNKILLGFSDGALQIWNLRVSKRVHE), 206–243 (GITSLTQAPVLDVLAVGTISGRIVIFNLKNGSILMEFK), 249–284 (LSCSFRTDGTPILASSNPIGDLSFWDLSKRRIQNVT), 289–332 (FGSL…RSRN), 339–373 (SFVKFYGKSVHFLISAATDRSLRAVSLYQDSQSTE), 399–438 (TALSSSNTREKYWDNVLTAHKNDSSARTWNWKSKTLGQHV), 447–481 (VRSVCVSCCGNFGLIGSSKGVVDVYNMQSGIKRKS), 492–528 (VTAVMLDNVNRILVTASLDGILKFWDFNKGNLIDSLD), 533–568 (ITHAIYQHSSDLVAVACDDFGIRIVDVQTRKIVREL), 570–611 (GHSN…DSIS), and 613–651 (PSVCTSLTFAPTGDYLATTHVDQVGISLWTNLSMFKHVS).

Interacts with snoRNA U3. Interacts with MPP10. Component of the ribosomal small subunit (SSU) processome composed of at least 40 protein subunits and snoRNA U3.

It localises to the nucleus. It is found in the nucleolus. Functionally, involved in nucleolar processing of pre-18S ribosomal RNA and ribosome assembly. The polypeptide is U3 small nucleolar RNA-associated protein 21 homolog (Schizosaccharomyces pombe (strain 972 / ATCC 24843) (Fission yeast)).